We begin with the raw amino-acid sequence, 1995 residues long: Myosin-14 (1995 aa).

The tract at residues 1-46 (MAAVTMSVPGRKAPPRPGPVPEAAQPFLFTPRGPSAGGGPGSGTSP) is disordered. Ala2 bears the N-acetylalanine mark. In terms of domain architecture, Myosin N-terminal SH3-like spans 51–101 (TARRLVWVPSELHGFEAAALRDEGEEEAEVELAESGRRLRLPRDQIQRMNP). Position 60 is a phosphoserine (Ser60). The Myosin motor domain occupies 105 to 800 (SKAEDMAELT…VLAQLEEERD (696 aa)). 198 to 205 (GESGAGKT) is a binding site for ATP. The actin-binding stretch occupies residues 678 to 700 (LSRLMATLSNTNPSFVRCIVPNH). Residues 803–832 (VTDIIVSFQAAARGYLARRAFQKRQQQQSA) form the IQ domain. A coiled-coil region spans residues 862-1947 (LQVTRQDEVL…VTTLRNRLRR (1086 aa)). Thr1194 is modified (phosphothreonine). Disordered regions lie at residues 1371–1415 (EEAA…RRAA), 1592–1623 (QHERDLQGRDEAGEERRRQLAKQLRDAEVERD), 1905–1942 (EAEEEASRAQAGRRRLQRELEDVTESAESMNREVTTLR), and 1958–1995 (RQVFRLEEGVASDEEAEEAQPGSGPSPEPEGSPPAHPQ). Residues 1930 to 1942 (SAESMNREVTTLR) are compositionally biased toward polar residues. A phosphoserine mark is found at Ser1969, Ser1980, Ser1983, and Ser1989. A compositionally biased stretch (pro residues) spans 1981 to 1995 (GPSPEPEGSPPAHPQ).

This sequence belongs to the TRAFAC class myosin-kinesin ATPase superfamily. Myosin family. Myosin is a hexameric protein that consists of 2 heavy chain subunits (MHC), 2 alkali light chain subunits (MLC) and 2 regulatory light chain subunits (MLC-2). High levels of expression are found in brain (highest in corpus callosum), heart, kidney, liver, lung, small intestine, colon and skeletal muscle. Expression is low in organs composed mainly of smooth muscle, such as aorta, uterus and urinary bladder. No detectable expression is found in thymus, spleen, placenta and lymphocytes.

Cellular myosin that appears to play a role in cytokinesis, cell shape, and specialized functions such as secretion and capping. The sequence is that of Myosin-14 (MYH14) from Homo sapiens (Human).